The sequence spans 202 residues: Dephospho-CoA kinase (202 aa).

Positions 4 to 202 (VIGLTGGIAT…TDKGFINKER (199 aa)) constitute a DPCK domain. 12 to 17 (ATGKST) contributes to the ATP binding site.

It belongs to the CoaE family.

The protein localises to the cytoplasm. It carries out the reaction 3'-dephospho-CoA + ATP = ADP + CoA + H(+). Its pathway is cofactor biosynthesis; coenzyme A biosynthesis; CoA from (R)-pantothenate: step 5/5. Its function is as follows. Catalyzes the phosphorylation of the 3'-hydroxyl group of dephosphocoenzyme A to form coenzyme A. The sequence is that of Dephospho-CoA kinase from Staphylococcus haemolyticus (strain JCSC1435).